The primary structure comprises 452 residues: Exodeoxyribonuclease 7 large subunit (452 aa).

Belongs to the XseA family. As to quaternary structure, heterooligomer composed of large and small subunits.

It is found in the cytoplasm. The enzyme catalyses Exonucleolytic cleavage in either 5'- to 3'- or 3'- to 5'-direction to yield nucleoside 5'-phosphates.. In terms of biological role, bidirectionally degrades single-stranded DNA into large acid-insoluble oligonucleotides, which are then degraded further into small acid-soluble oligonucleotides. The protein is Exodeoxyribonuclease 7 large subunit of Bacillus cereus (strain B4264).